The chain runs to 1460 residues: MKFLSATAVFAAALPSITSASSVESQIETKDLNSSRTGSSSSQSFTEIIPENGAEYRVSGDVSFSDFSNIPEEAETLAISHKEQPNNEVVLSEENHQASFQDSAQNQTENASEGNSPNSENTNQSSTTETESITTDEQVQNDNESAASVPTTVETATAMRLPSYHLQTESLVEGATEEDQNQPNSQNTSSGGGAFYNSQQGPLSFINDPDKDSSLTLSKIRVIGEGGAIYSKGPLSITGLKKLALKENLSQKAGGAICAESTISISSVDSIIFSKNTVTPPAANKPELPNDPSGSNGNDGSDDSNSSGNTDSNESNPNNSASNNTGSENELSSSTPSAQLPNPATPFLSSVSTNSQPIDTEPENAWHAESGSGGAIYSKGKLSIASSKEVVFDHNSATKNGGAIFGEEEIALEKIASLKFDSNTTGEKGGAIHAKTVTLSDIKNTLIFVNNTAKTPEENSLKSSQLNNQNPSEEEHQDTSEGEESQSLETSPITNQDSASSHVAIFRSIAASSSQSNSENIPNADGSTSAGGDAGSSSQPSTPGSDSSINHVIGGGAIYGEAVKIENLSGYGTFSNNNAVDHQISGSTSDVLGGAIYAKTSLTIDSGNSSGTITFSENTTSSKSTTGQVAGGAIFSPSVTITTPVTFSKNSAINATTSSKKDTFGGAIGAISTVSLSKGARFSENIADLGSAIGLVPTTQDAETVQLTTGSYYFEKNKALKRATVYAPIVSIKAHTATFDQNISAEEGSAIYFTKEATIESLGSVLFTGNLVTPIQSTTVLTSGNTSKYGAAIFGQIANASGSQTDNLPLKLIASGGNISFRNNEYRPDATNTGQSTFCSIAGDIKLTMQAAEGKVISFFDAIRTSTKKTGTLASAYDTLDINKSNDSGSINSAFTGTIMFSSELHENKSYIPQNVVLHSGSLILKANTELHVLSFDQKEGSSLIMEPGSVLSNQDIADGSLVVNSLTIDLSSVGRNSASGDNIFMPPELRIVDTSTNSGNSSSTPPSSNTPPNSTPTAQAPISKNFAATTTTPTTPPTTGNIVFLNGVIKLIDPNGTFFQNPALGSDQKISLLVLPSDQTKLQAQKVVLTGDISPKKGYTGTLTLDPQQLQNGVIQALWTFKSYRQWAYIPRDNHFYANSILGSQMSMATVKQGLINDKLNLARFDEVAYNNLWISGLGTMLSQRGGQRSEEMTYYSRGASVALDAKPTQDLIIGAAFSKMIGRSKSLKLERNYTHKGSEYSYQASVYGGSPFYLTINKEAGRSLPLLLQGVISYGYIKHDTVTHYPTIRELNKGEWEDLGWLTALRVSSILKTPKQGDSKRITVYGEVEYSSIRQKQFTETEYDPRYFSNCTYRNLAVPVGLALEGEFKGNDILMYNRFSVAYMPSIYRNSPVCKYQVLSSGEGGEIVCGVPTRNSSRAEYSTQLYLGPLWTLYGSYTLEADAHTLANMINCGARMTF.

An N-terminal signal peptide occupies residues 1–20 (MKFLSATAVFAAALPSITSA). Disordered regions lie at residues 21-48 (SSVESQIETKDLNSSRTGSSSSQSFTEI), 92-212 (SEEN…PDKD), 279-372 (TPPA…ESGS), 455-549 (TPEE…DSSI), and 993-1021 (VDTSTNSGNSSSTPPSSNTPPNSTPTAQA). Residues 34–44 (SSRTGSSSSQS) show a composition bias toward low complexity. Positions 97 to 114 (QASFQDSAQNQTENASEG) are enriched in polar residues. Over residues 115–137 (NSPNSENTNQSSTTETESITTDE) the composition is skewed to low complexity. The span at 138-155 (QVQNDNESAASVPTTVET) shows a compositional bias: polar residues. Low complexity predominate over residues 290–327 (NDPSGSNGNDGSDDSNSSGNTDSNESNPNNSASNNTGS). Over residues 328-358 (ENELSSSTPSAQLPNPATPFLSSVSTNSQPI) the composition is skewed to polar residues. Residues 461 to 471 (LKSSQLNNQNP) show a composition bias toward low complexity. Positions 487 to 501 (SLETSPITNQDSASS) are enriched in polar residues. 2 stretches are compositionally biased toward low complexity: residues 504–548 (AIFR…SDSS) and 995–1018 (TSTNSGNSSSTPPSSNTPPNSTPT). One can recognise an Autotransporter domain in the interval 1167–1460 (DEVAYNNLWI…MINCGARMTF (294 aa)).

The protein belongs to the PMP outer membrane protein family.

The protein resides in the secreted. It localises to the cell wall. It is found in the cell outer membrane. The polypeptide is Probable outer membrane protein PmpC (pmpC) (Chlamydia muridarum (strain MoPn / Nigg)).